The primary structure comprises 368 residues: tRNA 2-selenouridine synthase (368 aa).

The Rhodanese domain maps to 15 to 138; the sequence is FLNQHPIMDV…MRQYLIGVIE (124 aa). Cysteine 98 serves as the catalytic S-selanylcysteine intermediate.

It belongs to the SelU family. In terms of assembly, monomer.

The enzyme catalyses 5-methylaminomethyl-2-thiouridine(34) in tRNA + selenophosphate + (2E)-geranyl diphosphate + H2O + H(+) = 5-methylaminomethyl-2-selenouridine(34) in tRNA + (2E)-thiogeraniol + phosphate + diphosphate. It catalyses the reaction 5-methylaminomethyl-2-thiouridine(34) in tRNA + (2E)-geranyl diphosphate = 5-methylaminomethyl-S-(2E)-geranyl-thiouridine(34) in tRNA + diphosphate. It carries out the reaction 5-methylaminomethyl-S-(2E)-geranyl-thiouridine(34) in tRNA + selenophosphate + H(+) = 5-methylaminomethyl-2-(Se-phospho)selenouridine(34) in tRNA + (2E)-thiogeraniol. The catalysed reaction is 5-methylaminomethyl-2-(Se-phospho)selenouridine(34) in tRNA + H2O = 5-methylaminomethyl-2-selenouridine(34) in tRNA + phosphate. Functionally, involved in the post-transcriptional modification of the uridine at the wobble position (U34) of tRNA(Lys), tRNA(Glu) and tRNA(Gln). Catalyzes the conversion of 2-thiouridine (S2U-RNA) to 2-selenouridine (Se2U-RNA). Acts in a two-step process involving geranylation of 2-thiouridine (S2U) to S-geranyl-2-thiouridine (geS2U) and subsequent selenation of the latter derivative to 2-selenouridine (Se2U) in the tRNA chain. The polypeptide is tRNA 2-selenouridine synthase (Shewanella baltica (strain OS185)).